Reading from the N-terminus, the 342-residue chain is Guanine nucleotide-binding protein alpha-9 subunit (342 aa).

Gly-2 is lipidated: N-myristoyl glycine. Residue Cys-3 is the site of S-palmitoyl cysteine attachment. The 315-residue stretch at 28–342 (REIKLLLLGS…IIQSILKLHY (315 aa)) folds into the G-alpha domain. The interval 31 to 44 (KLLLLGSGDSGKST) is G1 motif. GTP contacts are provided by residues 36 to 43 (GSGDSGKS), 167 to 173 (LRCRQRT), 192 to 196 (DVGGQ), 261 to 264 (NKND), and Ala-316. Mg(2+) contacts are provided by Ser-43 and Thr-173. Positions 165–173 (DVLRCRQRT) are G2 motif. The G3 motif stretch occupies residues 188 to 197 (FRLIDVGGQK). Positions 257-264 (VLFLNKND) are G4 motif. The interval 314–319 (TTATDT) is G5 motif.

It belongs to the G-alpha family. In terms of assembly, g proteins are composed of 3 units; alpha, beta and gamma. The alpha chain contains the guanine nucleotide binding site.

Functionally, guanine nucleotide-binding proteins (G proteins) are involved as modulators or transducers in various transmembrane signaling systems. G alpha-9 antagonizes broad chemotactic response. It functions rapidly following receptor stimulation to negatively regulate PI3K/PTEN, adenylyl cyclase, and guanylyl cyclase pathways. This Dictyostelium discoideum (Social amoeba) protein is Guanine nucleotide-binding protein alpha-9 subunit (gpaI).